A 1279-amino-acid polypeptide reads, in one-letter code: Maestro heat-like repeat-containing protein family member 7 (1279 aa).

The disordered stretch occupies residues 1–145 (MALSRGTSLI…NSSRPCSEDV (145 aa)). Low complexity predominate over residues 39–61 (PDLALAPPPEHALALTPALHPAL). 2 stretches are compositionally biased toward polar residues: residues 71–106 (PVSN…NHTS) and 124–140 (PSST…SSRP). N-linked (GlcNAc...) asparagine glycosylation is found at N200, N210, N255, N267, and N296. A Phosphoserine modification is found at S356. N-linked (GlcNAc...) asparagine glycosylation is present at N541. The next 2 helical transmembrane spans lie at 548 to 568 (TLVT…LLLG) and 722 to 742 (LLPI…ALLM). HEAT repeat units follow at residues 913 to 950 (QELC…MEQV), 992 to 1029 (AKVQ…GQGK), 1035 to 1072 (AVYV…KLQT), and 1080 to 1117 (EQLT…FMNW).

The protein localises to the membrane. In Mus musculus (Mouse), this protein is Maestro heat-like repeat-containing protein family member 7 (Mroh7).